Reading from the N-terminus, the 660-residue chain is tRNA 5-methylaminomethyl-2-thiouridine biosynthesis bifunctional protein MnmC (660 aa).

Positions Met1–Ile235 are tRNA (mnm(5)s(2)U34)-methyltransferase. Residues Ile266–Lys660 are FAD-dependent cmnm(5)s(2)U34 oxidoreductase.

The protein in the N-terminal section; belongs to the methyltransferase superfamily. tRNA (mnm(5)s(2)U34)-methyltransferase family. This sequence in the C-terminal section; belongs to the DAO family. The cofactor is FAD.

The protein localises to the cytoplasm. The catalysed reaction is 5-aminomethyl-2-thiouridine(34) in tRNA + S-adenosyl-L-methionine = 5-methylaminomethyl-2-thiouridine(34) in tRNA + S-adenosyl-L-homocysteine + H(+). Functionally, catalyzes the last two steps in the biosynthesis of 5-methylaminomethyl-2-thiouridine (mnm(5)s(2)U) at the wobble position (U34) in tRNA. Catalyzes the FAD-dependent demodification of cmnm(5)s(2)U34 to nm(5)s(2)U34, followed by the transfer of a methyl group from S-adenosyl-L-methionine to nm(5)s(2)U34, to form mnm(5)s(2)U34. The sequence is that of tRNA 5-methylaminomethyl-2-thiouridine biosynthesis bifunctional protein MnmC from Pseudomonas savastanoi pv. phaseolicola (strain 1448A / Race 6) (Pseudomonas syringae pv. phaseolicola (strain 1448A / Race 6)).